Consider the following 262-residue polypeptide: KTSTRTRCAFEVAARDQGAGVTYLEPSASQIGHKESIKDTARVLGRMYDGIEYRGFAQETVEELAKYAGVPVFNGLTNEFHPTQMLADALTMREHSGKPLNQTAFAYIGDARYNMANSLLVLGAKLGMDVRIGAPKTLWPSENIVARARAVAEETGGKILLTENTKEAVKGADFIHTDVWVSMGEPKEVWQERIDLLKDYRVTPELMAVSGNSKVKFMHCLPAFHNRETKVGEWIYETFGLNGVEVTEEVFESPASIVFDQA.

Residues 3–7 (STRTR), glutamine 30, arginine 54, and 81–84 (HPTQ) each bind carbamoyl phosphate. Residues asparagine 114, aspartate 178, and 182-183 (SM) contribute to the L-ornithine site. Residues 219 to 222 (HCLP) and threonine 247 contribute to the carbamoyl phosphate site.

The protein belongs to the aspartate/ornithine carbamoyltransferase superfamily. OTCase family.

The protein resides in the cytoplasm. The catalysed reaction is carbamoyl phosphate + L-ornithine = L-citrulline + phosphate + H(+). Its pathway is amino-acid biosynthesis; L-arginine biosynthesis; L-arginine from L-ornithine and carbamoyl phosphate: step 1/3. In Neisseria cinerea, this protein is Ornithine carbamoyltransferase (argF).